The chain runs to 196 residues: Putative acetyltransferase YJL218W (196 aa).

Asn-84 contacts acetyl-CoA. The active-site Proton donor/acceptor is the His-114. Residues Gly-141, Ala-159, 164–165 (IR), Lys-179, and Arg-182 each bind acetyl-CoA.

The protein belongs to the transferase hexapeptide repeat family. Homodimer.

This Saccharomyces cerevisiae (strain ATCC 204508 / S288c) (Baker's yeast) protein is Putative acetyltransferase YJL218W.